We begin with the raw amino-acid sequence, 198 residues long: dITP/XTP pyrophosphatase (198 aa).

7–12 (TRNAGK) is a binding site for substrate. E40 and D69 together coordinate Mg(2+). D69 serves as the catalytic Proton acceptor. Residues S70, 152–155 (FGYD), K175, and 180–181 (HR) each bind substrate.

It belongs to the HAM1 NTPase family. As to quaternary structure, homodimer. Mg(2+) serves as cofactor.

It catalyses the reaction XTP + H2O = XMP + diphosphate + H(+). The enzyme catalyses dITP + H2O = dIMP + diphosphate + H(+). The catalysed reaction is ITP + H2O = IMP + diphosphate + H(+). Its function is as follows. Pyrophosphatase that catalyzes the hydrolysis of nucleoside triphosphates to their monophosphate derivatives, with a high preference for the non-canonical purine nucleotides XTP (xanthosine triphosphate), dITP (deoxyinosine triphosphate) and ITP. Seems to function as a house-cleaning enzyme that removes non-canonical purine nucleotides from the nucleotide pool, thus preventing their incorporation into DNA/RNA and avoiding chromosomal lesions. The protein is dITP/XTP pyrophosphatase of Exiguobacterium sibiricum (strain DSM 17290 / CCUG 55495 / CIP 109462 / JCM 13490 / 255-15).